Here is a 182-residue protein sequence, read N- to C-terminus: Adenine phosphoribosyltransferase (182 aa).

Belongs to the purine/pyrimidine phosphoribosyltransferase family. As to quaternary structure, homodimer.

The protein localises to the cytoplasm. The enzyme catalyses AMP + diphosphate = 5-phospho-alpha-D-ribose 1-diphosphate + adenine. It functions in the pathway purine metabolism; AMP biosynthesis via salvage pathway; AMP from adenine: step 1/1. In terms of biological role, catalyzes a salvage reaction resulting in the formation of AMP, that is energically less costly than de novo synthesis. The sequence is that of Adenine phosphoribosyltransferase from Streptomyces coelicolor (strain ATCC BAA-471 / A3(2) / M145).